The chain runs to 432 residues: Glutamyl-tRNA reductase (432 aa).

Substrate is bound by residues 49-52, serine 101, 106-108, and glutamine 112; these read TCNR and ESQ. Cysteine 50 serves as the catalytic Nucleophile. 181–186 serves as a coordination point for NADP(+); the sequence is GTGETI.

Belongs to the glutamyl-tRNA reductase family. In terms of assembly, homodimer.

It carries out the reaction (S)-4-amino-5-oxopentanoate + tRNA(Glu) + NADP(+) = L-glutamyl-tRNA(Glu) + NADPH + H(+). The protein operates within porphyrin-containing compound metabolism; protoporphyrin-IX biosynthesis; 5-aminolevulinate from L-glutamyl-tRNA(Glu): step 1/2. Its function is as follows. Catalyzes the NADPH-dependent reduction of glutamyl-tRNA(Glu) to glutamate 1-semialdehyde (GSA). The polypeptide is Glutamyl-tRNA reductase (Xylella fastidiosa (strain M12)).